We begin with the raw amino-acid sequence, 232 residues long: Heptaprenylglyceryl phosphate synthase (232 aa).

Residue lysine 12 participates in sn-glycerol 1-phosphate binding. Positions 14 and 40 each coordinate Mg(2+). Sn-glycerol 1-phosphate is bound by residues 159-164 (YLEYSG), glycine 189, and 209-210 (GN).

Belongs to the GGGP/HepGP synthase family. Group I subfamily. As to quaternary structure, homodimer. Mg(2+) is required as a cofactor.

The catalysed reaction is sn-glycerol 1-phosphate + all-trans-heptaprenyl diphosphate = 3-heptaprenyl-sn-glycero-1-phosphate + diphosphate. It participates in membrane lipid metabolism; glycerophospholipid metabolism. In terms of biological role, prenyltransferase that catalyzes in vivo the transfer of the heptaprenyl moiety of heptaprenyl pyrophosphate (HepPP; 35 carbon atoms) to the C3 hydroxyl of sn-glycerol-1-phosphate (G1P), producing heptaprenylglyceryl phosphate (HepGP). This reaction is an ether-bond-formation step in the biosynthesis of archaea-type G1P-based membrane lipids found in Bacillales. This Shouchella clausii (strain KSM-K16) (Alkalihalobacillus clausii) protein is Heptaprenylglyceryl phosphate synthase.